The following is a 321-amino-acid chain: Ribonuclease Z (321 aa).

Positions 62, 64, 66, 67, 139, 209, and 268 each coordinate Zn(2+). Aspartate 66 acts as the Proton acceptor in catalysis.

The protein belongs to the RNase Z family. As to quaternary structure, homodimer. It depends on Zn(2+) as a cofactor.

It carries out the reaction Endonucleolytic cleavage of RNA, removing extra 3' nucleotides from tRNA precursor, generating 3' termini of tRNAs. A 3'-hydroxy group is left at the tRNA terminus and a 5'-phosphoryl group is left at the trailer molecule.. Zinc phosphodiesterase, which displays some tRNA 3'-processing endonuclease activity. Probably involved in tRNA maturation, by removing a 3'-trailer from precursor tRNA. In Pseudomonas putida (strain W619), this protein is Ribonuclease Z.